We begin with the raw amino-acid sequence, 391 residues long: GATA-binding factor 6-A (391 aa).

A disordered region spans residues Gly-57–Ser-111. A compositionally biased stretch (low complexity) spans Ser-66–Ser-83. The segment covering Asn-96–Ser-111 has biased composition (polar residues). 2 consecutive GATA-type zinc fingers follow at residues Cys-182–Cys-206 and Cys-236–Cys-260. A disordered region spans residues Ala-274–Thr-355. The segment covering Thr-282 to Asn-291 has biased composition (basic residues). Residues Lys-292 to Ser-319 show a composition bias toward low complexity. A compositionally biased stretch (polar residues) spans Gly-326–Thr-355.

In terms of tissue distribution, in embryos, expressed in the presumptive heart mesoderm. In adults, expressed at high levels in heart, small intestine, and stomach and at lower levels in lung, pancreas and colon.

The protein localises to the nucleus. Its function is as follows. Transcriptional activator that binds 5'-GATA-3'-containing motifs within gene promoters. Regulates cardiac-specific transcription during embryogenesis and thereby cardiogenesis. This Xenopus laevis (African clawed frog) protein is GATA-binding factor 6-A (gata6-a).